We begin with the raw amino-acid sequence, 301 residues long: Aquaporin-10 (301 aa).

Over 1–22 the chain is Cytoplasmic; sequence MVFTQAPAEIMGHLRIRSLLAR. Residues 23–41 traverse the membrane as a helical segment; the sequence is QCLAEFLGVFVLMLLTQGA. Residues 42–55 lie on the Extracellular side of the membrane; that stretch reads VAQAVTSGETKGNF. Residues 56–75 form a helical membrane-spanning segment; that stretch reads FTMFLAGSLAVTIAIYVGGN. Over 76–77 the chain is Cytoplasmic; sequence VS. An intramembrane region (discontinuously helical) is located at residues 78–90; that stretch reads GAHLNPAFSLAMC. Residues 82 to 84 carry the NPA 1 motif; sequence NPA. Residues 91 to 96 are Cytoplasmic-facing; that stretch reads IVGRLP. A helical transmembrane segment spans residues 97-121; it reads WVKLPIYILVQLLSAFCASGATYVL. Residues 122 to 158 lie on the Extracellular side of the membrane; the sequence is YHDALQNYTGGNLTVTGPKETASIFATYPAPYLSLNN. N-linked (GlcNAc...) asparagine glycosylation is found at asparagine 128 and asparagine 133. The chain crosses the membrane as a helical span at residues 159–176; the sequence is GFLDQVLGTGMLIVGLLA. At 177–188 the chain is on the cytoplasmic side; it reads ILDRRNKGVPAG. Residues 189–205 traverse the membrane as a helical segment; that stretch reads LEPVVVGMLILALGLSM. The Extracellular portion of the chain corresponds to 206 to 208; it reads GAN. The segment at residues 209–223 is an intramembrane region (discontinuously helical); sequence CGIPLNPARDLGPRL. An NPA 2 motif is present at residues 214–216; it reads NPA. Residues 224–241 lie on the Extracellular side of the membrane; it reads FTYVAGWGPEVFSAGNGW. The chain crosses the membrane as a helical span at residues 242–262; the sequence is WWVPVVAPLVGATVGTATYQL. Topologically, residues 263–301 are cytoplasmic; the sequence is LVALHHPEGPEPAQDLVSAQHKASELETPASAQMLECKL.

It belongs to the MIP/aquaporin (TC 1.A.8) family. Homotetramer; each monomer provides an independent glycerol/water pore. Post-translationally, N-glycosylation at Asn-133 increases the stability of the protein but has no effect on its activity. As to expression, detected in epithelial cells on villi in the ileum, and also in stomach, jejunum, colon, rectum, white adipose tissue and placenta (at protein level). Expressed in duodenum and jejunum. Highest expression in absorptive epithelial cells at the tips of villi in the jejunum. Detected in subcutaneous adipose tissue.

The protein localises to the apical cell membrane. Its subcellular location is the cell membrane. It localises to the lipid droplet. The enzyme catalyses glycerol(in) = glycerol(out). It carries out the reaction H2O(in) = H2O(out). The catalysed reaction is urea(in) = urea(out). Its activity is regulated as follows. Glycerol transport is regulated by pH, with the porin being permeable to glycerol at pH 5.5 but not at pH 7.4. Water permeability, however, is not influenced by pH. Functionally, aquaglyceroporins form homotetrameric transmembrane channels, with each monomer independently mediating glycerol and water transport across the plasma membrane along their osmotic gradient. Could also be permeable to urea. Among aquaglyceroporins, it exhibits a unique pH-gated glycerol transport activity, being more active at acidic pH. It most likely plays a central role in the efflux of glycerol formed during triglyceride hydrolysis in adipocytes and in glycerol uptake by enterocytes, as both processes occur and are stimulated at acidic pH. This chain is Aquaporin-10, found in Homo sapiens (Human).